We begin with the raw amino-acid sequence, 274 residues long: HTH-type transcriptional regulator GadX (274 aa).

Residues 145–242 (TRVCTVINNN…GMTPTEYQER (98 aa)) enclose the HTH araC/xylS-type domain. DNA-binding regions (H-T-H motif) lie at residues 162–183 (ARIA…REEE) and 209–232 (IKRV…RNYY).

As to quaternary structure, homodimer.

In terms of biological role, positively regulates the expression of about fifteen genes involved in acid resistance such as gadA, gadB and gadC. Depending on the conditions (growth phase and medium), can repress gadW. The polypeptide is HTH-type transcriptional regulator GadX (gadX) (Escherichia coli O157:H7).